A 599-amino-acid chain; its full sequence is Kinesin light chain 2 (599 aa).

Residues 78 to 143 (ILALSSHLGA…KQHLLFMSQI (66 aa)) adopt a coiled-coil conformation. A compositionally biased stretch (basic and acidic residues) spans 154–163 (EKGDVPKDSL). A disordered region spans residues 154 to 188 (EKGDVPKDSLDDLFPNEDEQSPAPSPGGGDVAAQH). Phosphoserine occurs at positions 174 and 178. TPR repeat units lie at residues 197-230 (LRTL…LEKT), 239-272 (ATML…REKT), 281-314 (AATL…REKV), 323-356 (AKQL…YATR), and 365-398 (AKTK…AHEK). S443 carries the post-translational modification Phosphoserine. The TPR 6 repeat unit spans residues 447–480 (NTTLRTLGALYRPEGKLEAAHTLEDCASRSRKQG). The disordered stretch occupies residues 492–541 (LLKDGSGRGHRRGSRDVAGPQSESDLEESGPAAEWSGDGSGSLRRSGSFG). Phosphoserine is present on residues S505 and S515. Residues 532 to 541 (GSLRRSGSFG) show a composition bias toward low complexity. A phosphoserine mark is found at S574, S575, and S582.

This sequence belongs to the kinesin light chain family. In terms of assembly, oligomeric complex composed of two heavy chains and two light chains. Interacts (via TPR repeats) with PLEKHM2.

Its subcellular location is the cytoplasm. It localises to the cytoskeleton. The protein resides in the lysosome membrane. In terms of biological role, kinesin is a microtubule-associated force-producing protein that plays a role in organelle transport. The light chain functions in coupling of cargo to the heavy chain or in the modulation of its ATPase activity. Through binding with PLEKHM2 and ARL8B, recruits kinesin-1 to lysosomes and hence direct lysosomes movement toward microtubule plus ends. This Mus musculus (Mouse) protein is Kinesin light chain 2.